Consider the following 540-residue polypeptide: Lysosomal cobalamin transport escort protein LMBD1 (540 aa).

Over Met-1–Glu-10 the chain is Extracellular. A helical membrane pass occupies residues Leu-11 to Ile-31. The Cytoplasmic segment spans residues Tyr-32–Ala-50. Residues Ile-51–Val-71 traverse the membrane as a helical segment. The Extracellular segment spans residues Ser-72–Gly-100. Asn-78 and Asn-88 each carry an N-linked (GlcNAc...) asparagine glycan. The helical transmembrane segment at Tyr-101 to Phe-121 threads the bilayer. Topologically, residues Tyr-122–Thr-144 are cytoplasmic. The chain crosses the membrane as a helical span at residues Leu-145–Val-165. The Extracellular segment spans residues Pro-166 to His-188. Asn-170 carries N-linked (GlcNAc...) asparagine glycosylation. The helical transmembrane segment at Gly-189–Ile-209 threads the bilayer. Residues Thr-210–Lys-305 lie on the Cytoplasmic side of the membrane. The YERL motif; mediates interaction with adapter protein complex 2 and is essential for its function in clathrin-mediated endocytosis of INSR signature appears at Tyr-232–Leu-235. Residue Thr-238 is modified to Phosphothreonine. The WTKF motif; mediates interaction with adapter protein complex 2 and is essential for its function in clathrin-mediated endocytosis of INSR motif lies at Trp-294–Phe-297. Residues Ile-306–Ser-326 form a helical membrane-spanning segment. The Extracellular segment spans residues Asn-327 to Pro-364. An N-linked (GlcNAc...) asparagine glycan is attached at Asn-347. Residues Leu-365–Ile-385 traverse the membrane as a helical segment. The Cytoplasmic segment spans residues Arg-386–Gln-408. A helical transmembrane segment spans residues Ala-409 to Tyr-429. Topologically, residues Ser-430–Lys-486 are extracellular. N-linked (GlcNAc...) asparagine glycans are attached at residues Asn-448 and Asn-457. A helical membrane pass occupies residues Phe-487–Ile-507. Topologically, residues Gly-508 to Val-540 are cytoplasmic. Phosphoserine occurs at positions 528 and 531.

It belongs to the LIMR family. LMBRD1 subfamily. Interacts with ABCD4; this interaction induces the translocation of ABCD4 from the endoplasmic reticulum to the lysosome. Interacts with ABCD4 and MMACHC; this interaction ensures the transport of cobalamin from the lysosome to the cytoplasm. Interacts with INSR, adapter protein complex 2 and clathrin heavy chain. In terms of processing, N-glycosylated.

The protein resides in the lysosome membrane. It localises to the cell membrane. The protein localises to the cytoplasmic vesicle. Its subcellular location is the clathrin-coated vesicle. Lysosomal membrane chaperone required to export cobalamin (vitamin B12) from lysosome to the cytosol, allowing its conversion to cofactors. Targets ABCD4 transporter from the endoplasmic reticulum to the lysosomal membrane. Then forms a complex with lysosomal transporter ABCD4 and cytoplasmic MMACHC to transport cobalamin across the lysosomal membrane. Acts as an adapter protein which plays an important role in mediating and regulating the internalization of the insulin receptor (INSR). Involved in clathrin-mediated endocytosis of INSR via its interaction with adapter protein complex 2. Essential for the initiation of gastrulation and early formation of mesoderm structures during embryogenesis. The sequence is that of Lysosomal cobalamin transport escort protein LMBD1 (LMBRD1) from Macaca fascicularis (Crab-eating macaque).